We begin with the raw amino-acid sequence, 134 residues long: Protein OPG030 (134 aa).

Residues 88–133 (YKENGLRNSFLRQYINNNIEEIRNTDQFLKFDVDSVCDILNNDETI) form the BACK domain.

It belongs to the orthopoxvirus OPG030 family.

The sequence is that of Protein OPG030 (OPG30) from Variola virus (isolate Human/India/Ind3/1967) (VARV).